Here is a 324-residue protein sequence, read N- to C-terminus: NAD(P)H-dependent D-xylose reductase XYR1 (324 aa).

The Proton donor role is filled by tyrosine 50. Residue histidine 112 participates in substrate binding. Residues 168–169 (SN), 217–226 (SSFGPASFKE), and 273–283 (KSSREKTMKSN) each bind NAD(+).

The protein belongs to the aldo/keto reductase family.

The enzyme catalyses xylitol + NAD(+) = D-xylose + NADH + H(+). The catalysed reaction is xylitol + NADP(+) = D-xylose + NADPH + H(+). The protein operates within carbohydrate metabolism; D-xylose degradation. Its function is as follows. Catalyzes the initial reaction in the xylose utilization pathway by reducing D-xylose into xylitol. Xylose is a major component of hemicelluloses such as xylan. Most fungi utilize D-xylose via three enzymatic reactions, xylose reductase (XR), xylitol dehydrogenase (XDH), and xylulokinase, to form xylulose 5-phosphate, which enters pentose phosphate pathway. This is NAD(P)H-dependent D-xylose reductase XYR1 (XYR1) from Pyricularia oryzae (strain 70-15 / ATCC MYA-4617 / FGSC 8958) (Rice blast fungus).